The following is a 269-amino-acid chain: Shikimate dehydrogenase (NADP(+)) (269 aa).

Shikimate contacts are provided by residues 15–17 and Thr-62; that span reads SLS. Catalysis depends on Lys-66, which acts as the Proton acceptor. Shikimate contacts are provided by Asn-86 and Asp-100. NADP(+) contacts are provided by residues 124–128, 147–152, and Ile-211; these read GAGGA and NRTPER. Shikimate is bound at residue Tyr-213. Gly-234 contributes to the NADP(+) binding site.

This sequence belongs to the shikimate dehydrogenase family. In terms of assembly, homodimer.

The enzyme catalyses shikimate + NADP(+) = 3-dehydroshikimate + NADPH + H(+). It participates in metabolic intermediate biosynthesis; chorismate biosynthesis; chorismate from D-erythrose 4-phosphate and phosphoenolpyruvate: step 4/7. In terms of biological role, involved in the biosynthesis of the chorismate, which leads to the biosynthesis of aromatic amino acids. Catalyzes the reversible NADPH linked reduction of 3-dehydroshikimate (DHSA) to yield shikimate (SA). The sequence is that of Shikimate dehydrogenase (NADP(+)) from Methanococcoides burtonii (strain DSM 6242 / NBRC 107633 / OCM 468 / ACE-M).